An 84-amino-acid chain; its full sequence is Acyl carrier protein (84 aa).

One can recognise a Carrier domain in the interval 1–75 (MIFQKIQEFI…DILEYIQQHV (75 aa)). Serine 35 carries the post-translational modification O-(pantetheine 4'-phosphoryl)serine.

The protein belongs to the acyl carrier protein (ACP) family. Post-translationally, 4'-phosphopantetheine is transferred from CoA to a specific serine of apo-ACP by AcpS. This modification is essential for activity because fatty acids are bound in thioester linkage to the sulfhydryl of the prosthetic group.

It localises to the cytoplasm. It functions in the pathway lipid metabolism; fatty acid biosynthesis. Functionally, carrier of the growing fatty acid chain in fatty acid biosynthesis. This is Acyl carrier protein from Phytoplasma mali (strain AT).